The sequence spans 274 residues: ATP synthase subunit delta (274 aa).

Belongs to the ATPase delta chain family. F-type ATPases have 2 components, F(1) - the catalytic core - and F(0) - the membrane proton channel. F(1) has five subunits: alpha(3), beta(3), gamma(1), delta(1), epsilon(1). F(0) has three main subunits: a(1), b(2) and c(10-14). The alpha and beta chains form an alternating ring which encloses part of the gamma chain. F(1) is attached to F(0) by a central stalk formed by the gamma and epsilon chains, while a peripheral stalk is formed by the delta and b chains.

Its subcellular location is the cell membrane. Functionally, f(1)F(0) ATP synthase produces ATP from ADP in the presence of a proton or sodium gradient. F-type ATPases consist of two structural domains, F(1) containing the extramembraneous catalytic core and F(0) containing the membrane proton channel, linked together by a central stalk and a peripheral stalk. During catalysis, ATP synthesis in the catalytic domain of F(1) is coupled via a rotary mechanism of the central stalk subunits to proton translocation. In terms of biological role, this protein is part of the stalk that links CF(0) to CF(1). It either transmits conformational changes from CF(0) to CF(1) or is implicated in proton conduction. This chain is ATP synthase subunit delta, found in Salinispora arenicola (strain CNS-205).